Consider the following 834-residue polypeptide: MKLSRREFAKANAAAIAAAAAGLPLASTASNLITEADMTRLDWNKAPCRFCGTGCSVMVATRDNRVVATHGDVKAEVNRGLNCVKGYFLSKIMYGVDRLTQPLLRMKNGVYDKQGEFQPVSWDQAFDIMAQKIKQAIAEQGPEAVGMFGSGQWTVWEGYAANKLMKAGFRSNNIDPNARHCMASAVMGFMRTFGMDEPMGCYDDIEAADAFVLWGSNMAEMHPILWSRVTDRRLSHPNTRVAVLSTFEHRSFDLADIPLVFKPQTDLLILNYIANHIIESGAVNKDFVGKHTKFARGADDIGYGLRADNPLEMQAKNAAKANTWEDMSFEQFAAFVKPYTLERTAKESGVAAERLKALAKLYADPKRKVMSFWTMGFNQHTRGVWANNLIYNLHLLTGKISEPGNSPFSLTGQPSACGTAREVGTFSHRLPADMLVANPKHRETAEKIWKLPPGTIQEKPGFHAVEQSRKLKDGVLKVYWTQVSNNMQAGPNVMQEILPGWRNPQAFVIVSDVYPTVSAQAADLILPSAMWVEKEGAYGNAERRTQFWHQLVKAPGEAKSDLWQLVEFSKRFTTDEVWPAELLAKAPDYKGKTLYQVLFANGQVDQFPSEQIEAGYANDEAEAFGFYLQKGLFEEYARFGRGHAHDLAPFDSYHAERGLRWPVVDGKETRWRYREGHDPYVEKGSGVQFYGYPDKRALIFALPYEPPAEAPDDEFPFWLSTGRVLEHWHTGSMTQRVEELHGAVPDALVYMHPDDAKALKARRGSEVKVISRRGEIRARIETRGRNKPPRGLVFVPFFDANKLINKVTLDATDPISKQTDYKKCAVKIELVSLA.

The tat-type signal signal peptide spans Met-1 to Ala-29. The region spanning Leu-41–Asp-97 is the 4Fe-4S Mo/W bis-MGD-type domain. Residues Cys-48, Cys-51, Cys-55, and Cys-83 each coordinate [4Fe-4S] cluster. Residues Lys-85, Gln-152, Asn-177, Cys-181, Trp-214 to Met-221, Ser-245 to His-249, Gln-264 to Asp-266, Met-375, Gln-379, Asn-485, Ser-511 to Asp-512, Lys-534, Asp-561, and Thr-721 to Thr-730 contribute to the Mo-bis(molybdopterin guanine dinucleotide) site. Phe-797 lines the substrate pocket. 2 residues coordinate Mo-bis(molybdopterin guanine dinucleotide): Asn-805 and Lys-822.

This sequence belongs to the prokaryotic molybdopterin-containing oxidoreductase family. NasA/NapA/NarB subfamily. In terms of assembly, component of the periplasmic nitrate reductase NapAB complex composed of NapA and NapB. [4Fe-4S] cluster serves as cofactor. Mo-bis(molybdopterin guanine dinucleotide) is required as a cofactor. Predicted to be exported by the Tat system. The position of the signal peptide cleavage has not been experimentally proven.

The protein resides in the periplasm. It carries out the reaction 2 Fe(II)-[cytochrome] + nitrate + 2 H(+) = 2 Fe(III)-[cytochrome] + nitrite + H2O. In terms of biological role, catalytic subunit of the periplasmic nitrate reductase complex NapAB. Receives electrons from NapB and catalyzes the reduction of nitrate to nitrite. This is Periplasmic nitrate reductase from Ectopseudomonas mendocina (strain ymp) (Pseudomonas mendocina).